We begin with the raw amino-acid sequence, 226 residues long: Urease accessory protein UreF (226 aa).

Belongs to the UreF family. As to quaternary structure, ureD, UreF and UreG form a complex that acts as a GTP-hydrolysis-dependent molecular chaperone, activating the urease apoprotein by helping to assemble the nickel containing metallocenter of UreC. The UreE protein probably delivers the nickel.

The protein localises to the cytoplasm. Its function is as follows. Required for maturation of urease via the functional incorporation of the urease nickel metallocenter. This chain is Urease accessory protein UreF, found in Burkholderia multivorans (strain ATCC 17616 / 249).